Consider the following 1444-residue polypeptide: Protein shortage in chiasmata 1 ortholog (1444 aa).

A compositionally biased stretch (low complexity) spans 1106 to 1117 (SITKSPQISSPQ). Residues 1106 to 1129 (SITKSPQISSPQENRNQISTLSSQ) form a disordered region.

It belongs to the XPF family. Highly divergent. In terms of assembly, interacts with TEX11. Interacts with SPO16.

The protein localises to the chromosome. Its function is as follows. ATPase required during meiosis for the formation of crossover recombination intermediates. Binds DNA: preferentially binds to single-stranded DNA and DNA branched structures. Does not show nuclease activity in vitro, but shows ATPase activity, which is stimulated by the presence of single-stranded DNA. Plays a key role in homologous recombination and crossing-over in meiotic prophase I in male and female germ cells. Required for proper synaptonemal complex assembly and homologous chromosome pairing. Requiref for recruitment TEX11 and MSH4 to recombination intermediates. This chain is Protein shortage in chiasmata 1 ortholog, found in Homo sapiens (Human).